Consider the following 179-residue polypeptide: Cell division protein ZapC (179 aa).

This sequence belongs to the ZapC family. In terms of assembly, interacts directly with FtsZ.

The protein resides in the cytoplasm. Functionally, contributes to the efficiency of the cell division process by stabilizing the polymeric form of the cell division protein FtsZ. Acts by promoting interactions between FtsZ protofilaments and suppressing the GTPase activity of FtsZ. The chain is Cell division protein ZapC from Photobacterium profundum (strain SS9).